The chain runs to 286 residues: Thymidylate synthase (286 aa).

140–141 (RR) contacts dUMP. Catalysis depends on Cys-161, which acts as the Nucleophile. Residues 185-188 (RSND), Asn-196, and 226-228 (HIY) contribute to the dUMP site. Position 188 (Asp-188) interacts with (6R)-5,10-methylene-5,6,7,8-tetrahydrofolate. Ala-285 provides a ligand contact to (6R)-5,10-methylene-5,6,7,8-tetrahydrofolate.

It belongs to the thymidylate synthase family. Bacterial-type ThyA subfamily. Homodimer.

It is found in the cytoplasm. The catalysed reaction is dUMP + (6R)-5,10-methylene-5,6,7,8-tetrahydrofolate = 7,8-dihydrofolate + dTMP. The protein operates within pyrimidine metabolism; dTTP biosynthesis. Its function is as follows. Catalyzes the reductive methylation of 2'-deoxyuridine-5'-monophosphate (dUMP) to 2'-deoxythymidine-5'-monophosphate (dTMP) while utilizing 5,10-methylenetetrahydrofolate (mTHF) as the methyl donor and reductant in the reaction, yielding dihydrofolate (DHF) as a by-product. This enzymatic reaction provides an intracellular de novo source of dTMP, an essential precursor for DNA biosynthesis. The polypeptide is Thymidylate synthase (Streptococcus thermophilus (strain ATCC BAA-491 / LMD-9)).